The following is a 309-amino-acid chain: Verprolin (309 aa).

Pro residues predominate over residues 1 to 13 (MAPAPPPPPPAPA). Positions 1–273 (MAPAPPPPPP…PNRVDDHGRF (273 aa)) are disordered. The 18-residue stretch at 27–44 (DRSALLNSIQKGKKLKKA) folds into the WH2 domain. Over residues 82–91 (LPTSSNNTQQ) the composition is skewed to polar residues. Residues 141–207 (TSAPPRPSIP…PPKVPPPPLS (67 aa)) show a composition bias toward pro residues.

The protein belongs to the verprolin family. As to quaternary structure, interacts with wsp1. Interacts with myo1 (via SH3 domain). Interacts with actin monomers.

It is found in the cytoplasm. It localises to the cytoskeleton. Functionally, involved in cytoskeletal organization and cellular growth. May exert its effects on the cytoskeleton directly, or indirectly via proline-binding proteins such as profilin or proteins possessing SH3 domains. Plays a role in actin patch assembly by enhancing the ability of myo1 to stimulate actin polymerization by the Arp2/3 complex. This chain is Verprolin, found in Schizosaccharomyces pombe (strain 972 / ATCC 24843) (Fission yeast).